The following is a 366-amino-acid chain: Flagellar P-ring protein (366 aa).

Residues 1-20 form the signal peptide; that stretch reads MVIKFLSALILLLVTTAAQA.

The protein belongs to the FlgI family. As to quaternary structure, the basal body constitutes a major portion of the flagellar organelle and consists of four rings (L,P,S, and M) mounted on a central rod.

It localises to the periplasm. Its subcellular location is the bacterial flagellum basal body. In terms of biological role, assembles around the rod to form the L-ring and probably protects the motor/basal body from shearing forces during rotation. In Escherichia coli (strain SE11), this protein is Flagellar P-ring protein.